Reading from the N-terminus, the 648-residue chain is Macrolide export ATP-binding/permease protein MacB (648 aa).

Topologically, residues 1–272 are cytoplasmic; sequence MTPLLELKDI…RALAANKMRT (272 aa). Residues 5-243 enclose the ABC transporter domain; it reads LELKDIRRSY…TGGTEPVVNT (239 aa). ATP is bound at residue 41-48; that stretch reads GASGSGKS. The helical transmembrane segment at 273–293 threads the bilayer; the sequence is LLTMLGIIIGIASVVSIVVVG. Residues 294–522 lie on the Periplasmic side of the membrane; sequence DAAKQMVLAD…TVEKTTRTLQ (229 aa). Residues 523–543 form a helical membrane-spanning segment; the sequence is LFLTLVAVISLVVGGIGVMNI. Over 544–575 the chain is Cytoplasmic; sequence MLVSVTERTREIGIRMAVGARASDVLQQFLIE. The chain crosses the membrane as a helical span at residues 576–596; it reads AVLVCLVGGALGITLSLLIAF. Topologically, residues 597–610 are periplasmic; the sequence is TLQLFLPGWEIGFS. Residues 611–631 form a helical membrane-spanning segment; it reads PLALLLAFLCSTVTGILFGWL. The Cytoplasmic segment spans residues 632-648; that stretch reads PARNAARLDPVDALARE.

The protein belongs to the ABC transporter superfamily. Macrolide exporter (TC 3.A.1.122) family. As to quaternary structure, homodimer. Part of the tripartite efflux system MacAB-TolC, which is composed of an inner membrane transporter, MacB, a periplasmic membrane fusion protein, MacA, and an outer membrane component, TolC. The complex forms a large protein conduit and can translocate molecules across both the inner and outer membranes. Interacts with MacA.

The protein localises to the cell inner membrane. Its activity is regulated as follows. ATPase activity is stimulated by interaction with MacA and inhibited by vanadate. In terms of biological role, part of the tripartite efflux system MacAB-TolC. MacB is a non-canonical ABC transporter that contains transmembrane domains (TMD), which form a pore in the inner membrane, and an ATP-binding domain (NBD), which is responsible for energy generation. When overexpressed, the system confers resistance against macrolides composed of 14- and 15-membered lactones but no or weak resistance against 16-membered ones. In addition, the system could also transport R-LPS or a similar glycolipid. This chain is Macrolide export ATP-binding/permease protein MacB, found in Escherichia coli (strain K12).